Reading from the N-terminus, the 94-residue chain is Cell division topological specificity factor (94 aa).

Belongs to the MinE family.

Its function is as follows. Prevents the cell division inhibition by proteins MinC and MinD at internal division sites while permitting inhibition at polar sites. This ensures cell division at the proper site by restricting the formation of a division septum at the midpoint of the long axis of the cell. The polypeptide is Cell division topological specificity factor (Beijerinckia indica subsp. indica (strain ATCC 9039 / DSM 1715 / NCIMB 8712)).